We begin with the raw amino-acid sequence, 507 residues long: Heat shock 70 kDa protein 14-B (507 aa).

The protein belongs to the heat shock protein 70 family. Component of ribosome-associated complex (RAC).

Its subcellular location is the cytoplasm. It localises to the cytosol. Component of the ribosome-associated complex (RAC), a complex involved in folding or maintaining nascent polypeptides in a folding-competent state. The protein is Heat shock 70 kDa protein 14-B (hspa14-b) of Xenopus laevis (African clawed frog).